A 196-amino-acid chain; its full sequence is Large ribosomal subunit protein uL5 (196 aa).

It belongs to the universal ribosomal protein uL5 family. Part of the 50S ribosomal subunit; part of the 5S rRNA/L5/L18/L25 subcomplex. Contacts the 5S rRNA and the P site tRNA. Forms a bridge to the 30S subunit in the 70S ribosome.

In terms of biological role, this is one of the proteins that bind and probably mediate the attachment of the 5S RNA into the large ribosomal subunit, where it forms part of the central protuberance. In the 70S ribosome it contacts protein S13 of the 30S subunit (bridge B1b), connecting the 2 subunits; this bridge is implicated in subunit movement. Contacts the P site tRNA; the 5S rRNA and some of its associated proteins might help stabilize positioning of ribosome-bound tRNAs. This chain is Large ribosomal subunit protein uL5, found in Acidothermus cellulolyticus (strain ATCC 43068 / DSM 8971 / 11B).